A 489-amino-acid chain; its full sequence is Long chain base biosynthesis protein 2d (489 aa).

The helical transmembrane segment at 4–24 (LPYVTALTTLFSYGLLFAFGQ) threads the bilayer. An N6-(pyridoxal phosphate)lysine modification is found at K311.

This sequence belongs to the class-II pyridoxal-phosphate-dependent aminotransferase family. As to quaternary structure, heterodimer with LCB1. Component of the serine palmitoyltransferase (SPT) complex, composed of LCB1 and LCB2. Pyridoxal 5'-phosphate is required as a cofactor.

Its subcellular location is the endoplasmic reticulum membrane. The catalysed reaction is L-serine + hexadecanoyl-CoA + H(+) = 3-oxosphinganine + CO2 + CoA. It participates in lipid metabolism; sphingolipid metabolism. Its function is as follows. Serine palmitoyltransferase (SPT). The heterodimer formed with LCB1 constitutes the catalytic core. In Oryza sativa subsp. japonica (Rice), this protein is Long chain base biosynthesis protein 2d.